The primary structure comprises 355 residues: NAD-dependent protein deacylase sirtuin-6 (355 aa).

An N-acetylserine modification is found at Ser2. The residue at position 10 (Ser10) is a Phosphoserine. Positions 27 to 272 (PEELERKVWE…TQLMKHLGLE (246 aa)) constitute a Deacetylase sirtuin-type domain. N6-acetyllysine is present on Lys33. Residues Ala53, Thr57, Phe64, Arg65, Trp71, Gln113, and His133 each coordinate NAD(+). Catalysis depends on His133, which acts as the Proton acceptor. Cys141, Cys144, and Cys166 together coordinate Zn(2+). Lys170 is covalently cross-linked (Glycyl lysine isopeptide (Lys-Gly) (interchain with G-Cter in ubiquitin)). Cys177 is a Zn(2+) binding site. Gly214, Ser216, Asn240, Gln242, and Val258 together coordinate NAD(+). Positions 284–355 (KALPPLPRPP…KRVKAEVTPS (72 aa)) are disordered. A compositionally biased stretch (pro residues) spans 287–296 (PPLPRPPTPK). Thr294 carries the phosphothreonine modification. Residues Ser303 and Ser330 each carry the phosphoserine modification.

The protein belongs to the sirtuin family. Class IV subfamily. As to quaternary structure, homodimer; binds to nucleosomes and DNA ends as a homodimer. Interacts with RELA; interferes with RELA binding to target DNA. Interacts with SMARCA5; promoting recruitment of SMARCA5/SNF2H to double-strand breaks (DSBs) sites. Interacts with the mTORC2 complex; preventing the ability of SIRT6 to deacetylate FOXO1. Interacts with the CLOCK-BMAL1 complex; recruited by the CLOCK-BMAL1 complex to regulate expression of clock-controlled genes. Interacts with CSNK2A2; preventing CSNK2A2 localization to the nucleus. Acetylated at Lys-33. Deacetylation at Lys-33 by SIRT1 promotes homomultimerization and binding to double-strand breaks (DSBs) sites. Post-translationally, phosphorylation at Ser-10 by MAPK8/JNK1 in response to oxidative stress stimulates the mono-ADP-ribosyltransferase activity on PARP1, leading to PARP1 recruitment to double-strand breaks (DSBs). In terms of processing, monoubiquitinated at Lys-170 by STUB1/CHIP, preventing its degradation by the proteasome. Sumoylated, leading to specifically decrease ability to deacetylate histone H3 at 'Lys-56' (H3K56ac).

It localises to the nucleus. The protein resides in the chromosome. It is found in the telomere. Its subcellular location is the endoplasmic reticulum. The enzyme catalyses N(6)-acetyl-L-lysyl-[protein] + NAD(+) + H2O = 2''-O-acetyl-ADP-D-ribose + nicotinamide + L-lysyl-[protein]. It catalyses the reaction N(6)-tetradecanoyl-L-lysyl-[protein] + NAD(+) + H2O = 2''-O-tetradecanoyl-ADP-D-ribose + nicotinamide + L-lysyl-[protein]. It carries out the reaction N(6)-hexadecanoyl-L-lysyl-[protein] + NAD(+) + H2O = 2''-O-hexadecanoyl-ADP-D-ribose + nicotinamide + L-lysyl-[protein]. The catalysed reaction is L-lysyl-[protein] + NAD(+) = N(6)-(ADP-D-ribosyl)-L-lysyl-[protein] + nicotinamide + H(+). The enzyme catalyses L-arginyl-[protein] + NAD(+) = N(omega)-(ADP-D-ribosyl)-L-arginyl-[protein] + nicotinamide + H(+). With respect to regulation, compared to the defatty-acylase activity, the protein deacetylase activity is weak in vitro, and requires activation. The histone deacetylase activity is strongly activated upon binding to nucleosomes and chromatin in vivo. Two molecules of SIRT6 associate with the acidic patch of one nucleosome, while the C-terminal disordered region of SIRT6 associates with nucleosomal DNA, leading to efficient histone deacetylation. The protein-lysine deacetylase activity is also activated by long-chain free fatty-acids. Functionally, NAD-dependent protein deacetylase, deacylase and mono-ADP-ribosyltransferase that plays an essential role in DNA damage repair, telomere maintenance, metabolic homeostasis, inflammation, tumorigenesis and aging. Displays protein-lysine deacetylase or defatty-acylase (demyristoylase and depalmitoylase) activity, depending on the context. Acts as a key histone deacetylase by catalyzing deacetylation of histone H3 at 'Lys-9', 'Lys-18' and 'Lys-56' (H3K9ac, H3K18ac and H3K56ac, respectively), suppressing target gene expression of several transcription factors, including NF-kappa-B. Acts as an inhibitor of transcription elongation by mediating deacetylation of H3K9ac and H3K56ac, preventing release of NELFE from chromatin and causing transcriptional pausing. Involved in DNA repair by promoting double-strand break (DSB) repair: acts as a DSB sensor by recognizing and binding DSB sites, leading to (1) recruitment of DNA repair proteins, such as SMARCA5/SNF2H, and (2) deacetylation of histone H3K9ac and H3K56ac. SIRT6 participation to DSB repair is probably involved in extension of life span. Also promotes DNA repair by deacetylating non-histone proteins, such as DDB2 and p53/TP53. Specifically deacetylates H3K18ac at pericentric heterochromatin, thereby maintaining pericentric heterochromatin silencing at centromeres and protecting against genomic instability and cellular senescence. Involved in telomere maintenance by catalyzing deacetylation of histone H3 in telomeric chromatin, regulating telomere position effect and telomere movement in response to DNA damage. Required for embryonic stem cell differentiation by mediating histone deacetylation of H3K9ac. Plays a major role in metabolism by regulating processes such as glycolysis, gluconeogenesis, insulin secretion and lipid metabolism. Inhibits glycolysis via histone deacetylase activity and by acting as a corepressor of the transcription factor HIF1A, thereby controlling the expression of multiple glycolytic genes. Has tumor suppressor activity by repressing glycolysis, thereby inhibiting the Warburg effect. Also regulates glycolysis and tumorigenesis by mediating deacetylation and nuclear export of non-histone proteins, such as isoform M2 of PKM (PKM2). Acts as a negative regulator of gluconeogenesis by mediating deacetylation of non-histone proteins, such as FOXO1 and KAT2A/GCN5. Promotes beta-oxidation of fatty acids during fasting by catalyzing deacetylation of NCOA2, inducing coactivation of PPARA. Acts as a regulator of lipid catabolism in brown adipocytes, both by catalyzing deacetylation of histones and non-histone proteins, such as FOXO1. Also acts as a regulator of circadian rhythms, both by regulating expression of clock-controlled genes involved in lipid and carbohydrate metabolism, and by catalyzing deacetylation of PER2. The defatty-acylase activity is specifically involved in regulation of protein secretion. Has high activity toward long-chain fatty acyl groups and mediates protein-lysine demyristoylation and depalmitoylation of target proteins, such as RRAS2 and TNF, thereby regulating their secretion. Also acts as a mono-ADP-ribosyltransferase by mediating mono-ADP-ribosylation of PARP1, TRIM28/KAP1 or SMARCC2/BAF170. Mono-ADP-ribosyltransferase activity is involved in DNA repair, cellular senescence, repression of LINE-1 retrotransposon elements and regulation of transcription. The protein is NAD-dependent protein deacylase sirtuin-6 of Castor canadensis (American beaver).